Reading from the N-terminus, the 160-residue chain is Serine-protein kinase RsbW (160 aa).

Belongs to the anti-sigma-factor family.

The enzyme catalyses L-seryl-[protein] + ATP = O-phospho-L-seryl-[protein] + ADP + H(+). It carries out the reaction L-threonyl-[protein] + ATP = O-phospho-L-threonyl-[protein] + ADP + H(+). In terms of biological role, negative regulator of sigma-B activity. Phosphorylates and inactivates its specific antagonist protein, RsbV. Upon phosphorylation of RsbV, RsbW is released and binds to sigma-B, thereby blocking its ability to form an RNA polymerase holoenzyme (E-sigma-B). The sequence is that of Serine-protein kinase RsbW from Bacillus thuringiensis (strain Al Hakam).